Reading from the N-terminus, the 595-residue chain is Elongation factor 4 (595 aa).

Positions 2–184 (ETIRNFSIIA…TITHNIPYPK (183 aa)) constitute a tr-type G domain. GTP contacts are provided by residues 14–19 (DHGKST) and 131–134 (NKID).

Belongs to the TRAFAC class translation factor GTPase superfamily. Classic translation factor GTPase family. LepA subfamily.

The protein resides in the cell membrane. It carries out the reaction GTP + H2O = GDP + phosphate + H(+). In terms of biological role, required for accurate and efficient protein synthesis under certain stress conditions. May act as a fidelity factor of the translation reaction, by catalyzing a one-codon backward translocation of tRNAs on improperly translocated ribosomes. Back-translocation proceeds from a post-translocation (POST) complex to a pre-translocation (PRE) complex, thus giving elongation factor G a second chance to translocate the tRNAs correctly. Binds to ribosomes in a GTP-dependent manner. This Buchnera aphidicola subsp. Baizongia pistaciae (strain Bp) protein is Elongation factor 4.